We begin with the raw amino-acid sequence, 490 residues long: UDP-N-acetylmuramate--L-alanine ligase (490 aa).

Position 133–139 (glycine 133–serine 139) interacts with ATP.

Belongs to the MurCDEF family.

The protein localises to the cytoplasm. The catalysed reaction is UDP-N-acetyl-alpha-D-muramate + L-alanine + ATP = UDP-N-acetyl-alpha-D-muramoyl-L-alanine + ADP + phosphate + H(+). It functions in the pathway cell wall biogenesis; peptidoglycan biosynthesis. Its function is as follows. Cell wall formation. In Saccharopolyspora erythraea (strain ATCC 11635 / DSM 40517 / JCM 4748 / NBRC 13426 / NCIMB 8594 / NRRL 2338), this protein is UDP-N-acetylmuramate--L-alanine ligase.